Reading from the N-terminus, the 480-residue chain is Citrate synthase 1, peroxisomal (480 aa).

Residues His321, His360, and Asp416 contribute to the active site.

The protein belongs to the citrate synthase family. Expressed only in siliques. Not expressed in flower, stem, cauline leaf, young leaf, mature leaf and senescent leaf.

It is found in the peroxisome. It carries out the reaction oxaloacetate + acetyl-CoA + H2O = citrate + CoA + H(+). It participates in carbohydrate metabolism; tricarboxylic acid cycle; isocitrate from oxaloacetate: step 1/2. In Arabidopsis thaliana (Mouse-ear cress), this protein is Citrate synthase 1, peroxisomal (CSY1).